Here is a 146-residue protein sequence, read N- to C-terminus: 3-hydroxyacyl-[acyl-carrier-protein] dehydratase FabZ (146 aa).

Residue His-49 is part of the active site.

This sequence belongs to the thioester dehydratase family. FabZ subfamily.

It localises to the cytoplasm. The enzyme catalyses a (3R)-hydroxyacyl-[ACP] = a (2E)-enoyl-[ACP] + H2O. Its function is as follows. Involved in unsaturated fatty acids biosynthesis. Catalyzes the dehydration of short chain beta-hydroxyacyl-ACPs and long chain saturated and unsaturated beta-hydroxyacyl-ACPs. The polypeptide is 3-hydroxyacyl-[acyl-carrier-protein] dehydratase FabZ (Pseudomonas syringae pv. tomato (strain ATCC BAA-871 / DC3000)).